Here is a 78-residue protein sequence, read N- to C-terminus: Acyl carrier protein (78 aa).

A Carrier domain is found at methionine 1–lysine 76. Residue serine 36 is modified to O-(pantetheine 4'-phosphoryl)serine.

This sequence belongs to the acyl carrier protein (ACP) family. In terms of processing, 4'-phosphopantetheine is transferred from CoA to a specific serine of apo-ACP by AcpS. This modification is essential for activity because fatty acids are bound in thioester linkage to the sulfhydryl of the prosthetic group.

It is found in the cytoplasm. It participates in lipid metabolism; fatty acid biosynthesis. Carrier of the growing fatty acid chain in fatty acid biosynthesis. The chain is Acyl carrier protein from Helicobacter pylori (strain Shi470).